The sequence spans 1441 residues: Remodeling and spacing factor 1 (1441 aa).

In terms of domain architecture, DDT spans 17 to 84 (PGSCPNFAVV…MRKIGKSVTA (68 aa)). Residues K136 and K215 each participate in a glycyl lysine isopeptide (Lys-Gly) (interchain with G-Cter in SUMO2) cross-link. A compositionally biased stretch (polar residues) spans 215–227 (KNSSQQDNSSRES). The disordered stretch occupies residues 215–283 (KNSSQQDNSS…TTVKKEKEDE (69 aa)). S227 is modified (phosphoserine). Basic and acidic residues-rich tracts occupy residues 234–257 (ETKK…KSEE) and 274–283 (TTVKKEKEDE). Glycyl lysine isopeptide (Lys-Gly) (interchain with G-Cter in SUMO2) cross-links involve residues K236, K243, K248, K252, and K254. Residue K277 forms a Glycyl lysine isopeptide (Lys-Gly) (interchain with G-Cter in SUMO1); alternate linkage. K277 is covalently cross-linked (Glycyl lysine isopeptide (Lys-Gly) (interchain with G-Cter in SUMO2); alternate). Residues K284, K288, K294, K305, K306, K309, K323, K327, K337, K342, K358, K373, K381, and K390 each participate in a glycyl lysine isopeptide (Lys-Gly) (interchain with G-Cter in SUMO2) cross-link. Basic and acidic residues predominate over residues 330–340 (RADPKDTKSSM). The disordered stretch occupies residues 330-385 (RADPKDTKSSMEKPVAQEPERIEFGGNIKSSHEITEKSTEETEKLKNDQQAKIPLK). Residues 359-378 (SSHEITEKSTEETEKLKNDQ) show a composition bias toward basic and acidic residues. Phosphoserine occurs at positions 392 and 397. Glycyl lysine isopeptide (Lys-Gly) (interchain with G-Cter in SUMO2) cross-links involve residues K400, K405, K415, and K419. S429 carries the post-translational modification Phosphoserine. Residue K439 forms a Glycyl lysine isopeptide (Lys-Gly) (interchain with G-Cter in SUMO2) linkage. Residue K456 forms a Glycyl lysine isopeptide (Lys-Gly) (interchain with G-Cter in SUMO1); alternate linkage. K456 participates in a covalent cross-link: Glycyl lysine isopeptide (Lys-Gly) (interchain with G-Cter in SUMO2); alternate. Glycyl lysine isopeptide (Lys-Gly) (interchain with G-Cter in SUMO2) cross-links involve residues K463 and K468. The segment covering 467–480 (TKEESYSPSKDRNI) has biased composition (basic and acidic residues). Residues 467 to 634 (TKEESYSPSK…AAETSPPSNI (168 aa)) form a disordered region. A Phosphoserine modification is found at S473. The span at 482-498 (TEGNGTESLNSVITSMK) shows a compositional bias: polar residues. Residue K498 forms a Glycyl lysine isopeptide (Lys-Gly) (interchain with G-Cter in SUMO2) linkage. Residues 500 to 514 (GELEKETAPLRKDAD) show a composition bias toward basic and acidic residues. S524 is subject to Phosphoserine. Residues 552–562 (SKTALSSTESC) are compositionally biased toward polar residues. K565 is covalently cross-linked (Glycyl lysine isopeptide (Lys-Gly) (interchain with G-Cter in SUMO2)). Over residues 565-601 (KGEEKSPKTKKDKRPPILECLEKLEKSKKTFLDKDAQ) the composition is skewed to basic and acidic residues. Phosphoserine occurs at positions 570 and 604. Residues 609 to 621 (EVPKSTLESEKPG) are compositionally biased toward basic and acidic residues. S622 bears the Phosphoserine mark. Phosphothreonine is present on T628. S629 carries the post-translational modification Phosphoserine. Residues K662, K663, K670, K677, K698, and K709 each participate in a glycyl lysine isopeptide (Lys-Gly) (interchain with G-Cter in SUMO2) cross-link. The tract at residues 675–887 (FTKVEMDNLD…EEKESEEAIL (213 aa)) is disordered. A Phosphoserine modification is found at S748. 3 stretches are compositionally biased toward basic and acidic residues: residues 753–770 (LEPE…EKTN), 789–802 (AEIR…KRGE), and 816–831 (KTDK…KDTN). Residues K758, K768, K795, and K799 each participate in a glycyl lysine isopeptide (Lys-Gly) (interchain with G-Cter in SUMO2) cross-link. The segment covering 864 to 873 (GSGSEKSSAA) has biased composition (low complexity). The span at 874–887 (SEEEEEKESEEAIL) shows a compositional bias: acidic residues. Residue S882 is modified to Phosphoserine. A PHD-type zinc finger spans residues 891 to 941 (DEPCKKCGLPNHPELILLCDSCDSGYHTACLRPPLMIIPDGEWFCPPCQHK). A coiled-coil region spans residues 942–1012 (LLCEKLEEQL…SKANLLERRS (71 aa)). The segment at 983–1007 (PPQEPDFSEDQEEKKKDSKKSKANL) is disordered. K1039 participates in a covalent cross-link: Glycyl lysine isopeptide (Lys-Gly) (interchain with G-Cter in SUMO2). N6-acetyllysine is present on K1050. Residues 1063-1428 (ISTILDEERK…EEEEDELLRV (366 aa)) are disordered. Composition is skewed to acidic residues over residues 1094 to 1107 (LDSD…ESED) and 1120 to 1141 (VVSD…DSDT). A phosphoserine mark is found at S1096, S1098, and S1105. The segment covering 1146–1169 (RRLRRHPSRPMRQSRRLRRKTPKK) has biased composition (basic residues). A compositionally biased stretch (acidic residues) spans 1189 to 1199 (SDFSDDFSDDF). Positions 1203-1212 (RRRRSRRNQK) are enriched in basic residues. Residues S1221, S1223, and S1226 each carry the phosphoserine modification. Residues 1229-1244 (SLRRGKEIRRVHKRRL) show a composition bias toward basic residues. Phosphoserine occurs at positions 1258 and 1277. T1278 carries the post-translational modification Phosphothreonine. A compositionally biased stretch (acidic residues) spans 1280 to 1292 (EYSEADEEEEEEE). Position 1305 is a phosphothreonine (T1305). A phosphoserine mark is found at S1325 and S1336. Positions 1335 to 1344 (ESTKKPYRIE) are enriched in basic and acidic residues. K1339 is subject to N6-acetyllysine. Residues S1345, S1359, and S1375 each carry the phosphoserine modification. The segment covering 1394 to 1408 (PKDNSTASASLASNG) has biased composition (polar residues).

In terms of assembly, component of the RSF-1 ISWI chromatin-remodeling complex at least composed of SMARCA1 and RSF1. Within the RSF-1 ISWI chromatin-remodeling complex interacts with SMARCA1. Component of the RSF-5 ISWI chromatin-remodeling complex (also called the RSF complex) at least composed of SMARCA5/SNF2H and RSF1. Within the RSF-5 ISWI chromatin-remodeling complex interacts with SMARCA5/SNF2H; the interaction is direct. Identified in a centromere complex containing histones H2A, H2B and H4, and at least CENPA, CENPB, CENPC, CENPT, CENPN, HJURP, SUPT16H, SSRP1 and RSF1. Also binds the HBV pX/HBx protein, which is required to activate transcription of the viral genome. Post-translationally, phosphorylated. In terms of tissue distribution, ubiquitously expressed. Highly expressed in the heart, skeletal muscle, kidney and placenta. Expressed at low levels in the brain and colon.

It is found in the nucleus. Functionally, regulatory subunit of the ATP-dependent RSF-1 and RSF-5 ISWI chromatin-remodeling complexes, which form ordered nucleosome arrays on chromatin and facilitate access to DNA during DNA-templated processes such as DNA replication, transcription, and repair. Binds to core histones together with SMARCA5, and is required for the assembly of regular nucleosome arrays by the RSF-5 ISWI chromatin-remodeling complex. Directly stimulates the ATPase activity of SMARCA1 and SMARCA5 in the RSF-1 and RSF-5 ISWI chromatin-remodeling complexes, respectively. The RSF-1 ISWI chromatin remodeling complex has a lower ATP hydrolysis rate than the RSF-5 ISWI chromatin-remodeling complex. The complexes do not have the ability to slide mononucleosomes to the center of a DNA template. Facilitates transcription of hepatitis B virus (HBV) genes by the pX transcription activator. In case of infection by HBV, together with pX, it represses TNF-alpha induced NF-kappa-B transcription activation. Represses transcription when artificially recruited to chromatin by fusion to a heterogeneous DNA binding domain. This is Remodeling and spacing factor 1 (RSF1) from Homo sapiens (Human).